A 428-amino-acid chain; its full sequence is Aminotransferase verI (428 aa).

N6-(pyridoxal phosphate)lysine is present on Lys-254.

The protein belongs to the class-I pyridoxal-phosphate-dependent aminotransferase family. Pyridoxal 5'-phosphate serves as cofactor.

It functions in the pathway mycotoxin biosynthesis. Aminotransferase; part of the gene cluster that mediates the biosynthesis of 11'-deoxyverticillin A, one of the dimeric epipolythiodioxopiperazines (ETPs) from the verticillin family that act as mycotoxins. 11'-deoxyverticillin A is required for normal conidiation. The nonribosomal peptide synthetase verP is speculated to be responsible for condensation of amino acids to form the carbon skeleton of verticillin, whereas the cluster-specific tailoring enzymes are involved in further modifications leading to the production of 11'-deoxyverticillin A. The polypeptide is Aminotransferase verI (Clonostachys rogersoniana).